Here is a 173-residue protein sequence, read N- to C-terminus: Nicotinamide-nucleotide adenylyltransferase (173 aa).

This sequence belongs to the archaeal NMN adenylyltransferase family.

The protein resides in the cytoplasm. The enzyme catalyses beta-nicotinamide D-ribonucleotide + ATP + H(+) = diphosphate + NAD(+). It participates in cofactor biosynthesis; NAD(+) biosynthesis; NAD(+) from nicotinamide D-ribonucleotide: step 1/1. The sequence is that of Nicotinamide-nucleotide adenylyltransferase (ffdC) from Methanolobus tindarius.